The following is a 505-amino-acid chain: Cytochrome P450 2K6 (505 aa).

The helical transmembrane segment at 7 to 27 threads the bilayer; it reads FLLQGSPTGTILGALLLFLVI. Cys-448 provides a ligand contact to heme.

This sequence belongs to the cytochrome P450 family. Requires heme as cofactor. As to expression, detected in liver and ovary.

Its subcellular location is the endoplasmic reticulum membrane. The protein localises to the microsome membrane. Its function is as follows. Metabolizes aflatoxin B1 (AFB1) to the cytotoxic derivative AFB1 exo-8,9-epoxide. Does not show activity towards lauric acid. In Danio rerio (Zebrafish), this protein is Cytochrome P450 2K6.